Here is a 378-residue protein sequence, read N- to C-terminus: Palmitoyltransferase PFA4 (378 aa).

Residues 1–9 (MPVKLRWPW) lie on the Cytoplasmic side of the membrane. The helical transmembrane segment at 10-30 (LGIAIPTFLISFIGYGAHYFI) threads the bilayer. The Lumenal portion of the chain corresponds to 31–40 (LSNFLSVPKQ). The helical transmembrane segment at 41-61 (ITFEFCLSMIWLSYYLAICTN) threads the bilayer. Residues 62–119 (PGRPLPNYKPPPDIWRNFCKKCQSYKPERSHHCKTCNQCVLMMDHHCPWTMNCVGFAN) are Cytoplasmic-facing. The DHHC domain maps to 78 to 128 (NFCKKCQSYKPERSHHCKTCNQCVLMMDHHCPWTMNCVGFANYPHFLRFLF). Catalysis depends on cysteine 108, which acts as the S-palmitoyl cysteine intermediate. Residues 120–140 (YPHFLRFLFWIIVTTSVLFCI) form a helical membrane-spanning segment. The Lumenal segment spans residues 141 to 164 (QAKRIYFIWQQRHLPGYFFKKSEL). A helical membrane pass occupies residues 165–185 (IFLTISSPLNSFVLLTITILF). Over 186 to 378 (LRCLFNQILN…DDFGVDVDME (193 aa)) the chain is Cytoplasmic.

The protein belongs to the DHHC palmitoyltransferase family. PFA4 subfamily. Autopalmitoylated.

It localises to the endoplasmic reticulum membrane. It catalyses the reaction L-cysteinyl-[protein] + hexadecanoyl-CoA = S-hexadecanoyl-L-cysteinyl-[protein] + CoA. Functionally, mediates the reversible addition of palmitate to target proteins, thereby regulating their membrane association and biological function. Palmitoylates several amino acid permeases. Palmitoylates chitin synthase CHS3, which is required for its proper export from the ER. Can palmitoylate RAS2 in vitro. The protein is Palmitoyltransferase PFA4 of Saccharomyces cerevisiae (strain ATCC 204508 / S288c) (Baker's yeast).